Here is a 185-residue protein sequence, read N- to C-terminus: UPF0200 protein Mevan_0592 (185 aa).

Position 8–15 (Gly8–Ser15) interacts with ATP.

It belongs to the UPF0200 family.

The protein is UPF0200 protein Mevan_0592 of Methanococcus vannielii (strain ATCC 35089 / DSM 1224 / JCM 13029 / OCM 148 / SB).